We begin with the raw amino-acid sequence, 391 residues long: Secreted aspartic protease 1 (391 aa).

Residues 1 to 18 form the signal peptide; sequence MFLKNIFIALAIALLVDA. A propeptide spans 19 to 50 (activation peptide); it reads SPAKRSPGFVTLDFDVIKTPVNATGQEGKVKR. N-linked (GlcNAc...) asparagine glycosylation occurs at Asn40. One can recognise a Peptidase A1 domain in the interval 64 to 377; that stretch reads YAADITIGSN…DLDDDKISLA (314 aa). Residue Asp82 is part of the active site. Residue 82–84 participates in pepstatin A binding; sequence DTG. Cys97 and Cys109 are joined by a disulfide. The Zn(2+) site is built by Asp241 and Asp263. The active site involves Asp267. Residue 267–271 coordinates pepstatin A; it reads DSGTT. Cysteines 305 and 343 form a disulfide.

This sequence belongs to the peptidase A1 family. As to quaternary structure, monomer.

Its subcellular location is the secreted. The enzyme catalyses Preferential cleavage at the carboxyl of hydrophobic amino acids, but fails to cleave 15-Leu-|-Tyr-16, 16-Tyr-|-Leu-17 and 24-Phe-|-Phe-25 of insulin B chain. Activates trypsinogen, and degrades keratin.. Inhibited by pepstatin A analogs and squash aspartic peptidase inhibitor (SQAPI). Its function is as follows. Secreted aspartic peptidases (SAPs) are a group of ten acidic hydrolases considered as key virulence factors. These enzymes supply the fungus with nutrient amino acids as well as are able to degrade the selected host's proteins involved in the immune defense. Induces host inflammatory cytokine production in a proteolytic activity-independent way. Plays a role in tissue damage during superficial infection. Moreover, acts toward human hemoglobin though limited proteolysis to generate a variety of antimicrobial hemocidins, enabling to compete with the other microorganisms of the same physiological niche using the microbicidal peptides generated from the host protein. In terms of biological role, plays a key role in defense against host by cleaving histatin-5 (Hst 5), a peptide from human saliva that carries out fungicidal activity. The cleavage rate decreases in an order of SAP2 &gt; SAP9 &gt; SAP3 &gt; SAP7 &gt; SAP4 &gt; SAP1 &gt; SAP8. The first cleavage occurs between residues 'Lys-17' and 'His-18' of Hst 5, giving DSHAKRHHGYKRKFHEK and HHSHRGY peptides. Further fragmentation by SAP1 results in AKRHHGYKRKFHEK and AKRHHGY products. In Candida albicans (Yeast), this protein is Secreted aspartic protease 1.